The primary structure comprises 215 residues: tRNA (guanine-N(7)-)-methyltransferase (215 aa).

E43, E68, D95, and D117 together coordinate S-adenosyl-L-methionine. D117 is an active-site residue. Residues K121, D153, and 190–193 (TEYE) each bind substrate.

The protein belongs to the class I-like SAM-binding methyltransferase superfamily. TrmB family.

The catalysed reaction is guanosine(46) in tRNA + S-adenosyl-L-methionine = N(7)-methylguanosine(46) in tRNA + S-adenosyl-L-homocysteine. Its pathway is tRNA modification; N(7)-methylguanine-tRNA biosynthesis. In terms of biological role, catalyzes the formation of N(7)-methylguanine at position 46 (m7G46) in tRNA. This chain is tRNA (guanine-N(7)-)-methyltransferase, found in Staphylococcus epidermidis (strain ATCC 35984 / DSM 28319 / BCRC 17069 / CCUG 31568 / BM 3577 / RP62A).